We begin with the raw amino-acid sequence, 195 residues long: Peptidyl-tRNA hydrolase (195 aa).

Tyr-17 provides a ligand contact to tRNA. His-22 acts as the Proton acceptor in catalysis. Residues Phe-68, Asn-70, and Asn-116 each contribute to the tRNA site.

The protein belongs to the PTH family. Monomer.

It is found in the cytoplasm. It carries out the reaction an N-acyl-L-alpha-aminoacyl-tRNA + H2O = an N-acyl-L-amino acid + a tRNA + H(+). Its function is as follows. Hydrolyzes ribosome-free peptidyl-tRNAs (with 1 or more amino acids incorporated), which drop off the ribosome during protein synthesis, or as a result of ribosome stalling. Catalyzes the release of premature peptidyl moieties from peptidyl-tRNA molecules trapped in stalled 50S ribosomal subunits, and thus maintains levels of free tRNAs and 50S ribosomes. The polypeptide is Peptidyl-tRNA hydrolase (Pectobacterium atrosepticum (strain SCRI 1043 / ATCC BAA-672) (Erwinia carotovora subsp. atroseptica)).